The chain runs to 209 residues: Ribosomal RNA large subunit methyltransferase E (209 aa).

Positions 63, 65, 83, 99, and 124 each coordinate S-adenosyl-L-methionine. Residue Lys164 is the Proton acceptor of the active site.

The protein belongs to the class I-like SAM-binding methyltransferase superfamily. RNA methyltransferase RlmE family.

The protein localises to the cytoplasm. The enzyme catalyses uridine(2552) in 23S rRNA + S-adenosyl-L-methionine = 2'-O-methyluridine(2552) in 23S rRNA + S-adenosyl-L-homocysteine + H(+). Its function is as follows. Specifically methylates the uridine in position 2552 of 23S rRNA at the 2'-O position of the ribose in the fully assembled 50S ribosomal subunit. This chain is Ribosomal RNA large subunit methyltransferase E, found in Pseudoalteromonas translucida (strain TAC 125).